The primary structure comprises 309 residues: Porphobilinogen deaminase (309 aa).

An S-(dipyrrolylmethanemethyl)cysteine modification is found at Cys243.

The protein belongs to the HMBS family. Monomer. Requires dipyrromethane as cofactor.

It carries out the reaction 4 porphobilinogen + H2O = hydroxymethylbilane + 4 NH4(+). Its pathway is porphyrin-containing compound metabolism; protoporphyrin-IX biosynthesis; coproporphyrinogen-III from 5-aminolevulinate: step 2/4. Its function is as follows. Tetrapolymerization of the monopyrrole PBG into the hydroxymethylbilane pre-uroporphyrinogen in several discrete steps. This chain is Porphobilinogen deaminase (hemC), found in Deinococcus radiodurans (strain ATCC 13939 / DSM 20539 / JCM 16871 / CCUG 27074 / LMG 4051 / NBRC 15346 / NCIMB 9279 / VKM B-1422 / R1).